The following is a 141-amino-acid chain: Hydroperoxide reductase (141 aa).

This sequence belongs to the OsmC/Ohr family. Homodimer.

It is found in the cytoplasm. Functionally, reduces organic and inorganic peroxide substrates. Protects the cell against oxidative stress. The chain is Hydroperoxide reductase from Mycoplasma genitalium (strain ATCC 33530 / DSM 19775 / NCTC 10195 / G37) (Mycoplasmoides genitalium).